Here is a 516-residue protein sequence, read N- to C-terminus: Nucleolar complex protein 4 homolog (516 aa).

3 consecutive transmembrane segments (helical) span residues 296–316 (SACD…FILI), 347–367 (FFHL…LVAA), and 375–395 (LALT…CNLL).

The protein belongs to the CBF/MAK21 family.

It localises to the nucleus membrane. It is found in the nucleus. Its subcellular location is the nucleolus. The sequence is that of Nucleolar complex protein 4 homolog (Noc4l) from Mus musculus (Mouse).